The chain runs to 86 residues: Large ribosomal subunit protein bL31B (86 aa).

It belongs to the bacterial ribosomal protein bL31 family. Type B subfamily. As to quaternary structure, part of the 50S ribosomal subunit.

This chain is Large ribosomal subunit protein bL31B, found in Vibrio campbellii (strain ATCC BAA-1116).